A 174-amino-acid polypeptide reads, in one-letter code: MIKRSLASLVRVSSVMGRRYMIAAAGGERARFCPAVTNKKNHTVNTFQKRFVESSTDGQVVPQEVLNLPLEKYHEEADDYLDHLLDSLEELSEAHPDCIPDVELSHGVMTLEIPAFGTYVINKQPPNKQIWLASPLSGPNRFDLLNGEWVSLRNGTKLTDILTEEVEKAISKSQ.

The transit peptide at 1-21 directs the protein to the mitochondrion; it reads MIKRSLASLVRVSSVMGRRYM.

It belongs to the frataxin family. As to quaternary structure, monomer. Forms a 24-mer complex made up of 8 copies of a trimeric subcomplex. Increments in mitochondrial iron uptake induce stepwise assembly of species ranging from trimers to 24-mers. Interacts with ISU1 with a 1 to 1 stoichiometry; the interaction is direct. Interacts with YHB1, SDH1, SDH2, AIM45 and CIR1. Processed in two steps by mitochondrial processing peptidase (MPP). MPP first cleaves the precursor to intermediate form and subsequently converts the intermediate to mature size protein.

Its subcellular location is the mitochondrion matrix. It catalyses the reaction 4 Fe(2+) + O2 + 4 H(+) = 4 Fe(3+) + 2 H2O. Its function is as follows. Promotes the biosynthesis of heme as well as the assembly and repair of iron-sulfur clusters by delivering Fe(2+) to proteins involved in these pathways. Plays a role in the protection against iron-catalyzed oxidative stress through its ability to catalyze the oxidation of Fe(2+) to Fe(3+). Can store large amounts of the metal in the form of a ferrihydrite mineral by oligomerization. May be involved in regulation of the mitochondrial electron transport chain. This chain is Frataxin homolog, mitochondrial, found in Saccharomyces cerevisiae (strain ATCC 204508 / S288c) (Baker's yeast).